The primary structure comprises 393 residues: Histidinol dehydrogenase (393 aa).

Positions 112, 171, and 194 each coordinate NAD(+). 3 residues coordinate substrate: threonine 217, glutamine 239, and histidine 242. Zn(2+) contacts are provided by glutamine 239 and histidine 242. Catalysis depends on proton acceptor residues glutamate 293 and histidine 294. 4 residues coordinate substrate: histidine 294, aspartate 326, glutamate 379, and histidine 384. Aspartate 326 lines the Zn(2+) pocket. Histidine 384 is a Zn(2+) binding site.

The protein belongs to the histidinol dehydrogenase family. Zn(2+) serves as cofactor.

The catalysed reaction is L-histidinol + 2 NAD(+) + H2O = L-histidine + 2 NADH + 3 H(+). It participates in amino-acid biosynthesis; L-histidine biosynthesis; L-histidine from 5-phospho-alpha-D-ribose 1-diphosphate: step 9/9. Catalyzes the sequential NAD-dependent oxidations of L-histidinol to L-histidinaldehyde and then to L-histidine. In Sulfolobus acidocaldarius (strain ATCC 33909 / DSM 639 / JCM 8929 / NBRC 15157 / NCIMB 11770), this protein is Histidinol dehydrogenase.